The chain runs to 188 residues: Protein GrpE (188 aa).

Positions 1 to 16 are enriched in basic and acidic residues; sequence MEERNEQVVEEVKEAQ. A disordered region spans residues 1-31; the sequence is MEERNEQVVEEVKEAQVEEAVTPENSEETVE.

This sequence belongs to the GrpE family. In terms of assembly, homodimer.

It localises to the cytoplasm. Its function is as follows. Participates actively in the response to hyperosmotic and heat shock by preventing the aggregation of stress-denatured proteins, in association with DnaK and GrpE. It is the nucleotide exchange factor for DnaK and may function as a thermosensor. Unfolded proteins bind initially to DnaJ; upon interaction with the DnaJ-bound protein, DnaK hydrolyzes its bound ATP, resulting in the formation of a stable complex. GrpE releases ADP from DnaK; ATP binding to DnaK triggers the release of the substrate protein, thus completing the reaction cycle. Several rounds of ATP-dependent interactions between DnaJ, DnaK and GrpE are required for fully efficient folding. The protein is Protein GrpE of Bacillus anthracis.